A 306-amino-acid polypeptide reads, in one-letter code: Porphobilinogen deaminase (306 aa).

Cysteine 240 carries the S-(dipyrrolylmethanemethyl)cysteine modification.

It belongs to the HMBS family. As to quaternary structure, monomer. Dipyrromethane serves as cofactor.

It carries out the reaction 4 porphobilinogen + H2O = hydroxymethylbilane + 4 NH4(+). The protein operates within porphyrin-containing compound metabolism; protoporphyrin-IX biosynthesis; coproporphyrinogen-III from 5-aminolevulinate: step 2/4. Functionally, tetrapolymerization of the monopyrrole PBG into the hydroxymethylbilane pre-uroporphyrinogen in several discrete steps. This chain is Porphobilinogen deaminase, found in Syntrophomonas wolfei subsp. wolfei (strain DSM 2245B / Goettingen).